A 349-amino-acid polypeptide reads, in one-letter code: DNA polymerase IV (349 aa).

One can recognise a UmuC domain in the interval 3–187 (VLFVDFDYFF…LDISKVPGVG (185 aa)). Residues D7 and D105 each contribute to the Mg(2+) site. Residue E106 is part of the active site.

Belongs to the DNA polymerase type-Y family. As to quaternary structure, monomer. The cofactor is Mg(2+).

It localises to the cytoplasm. It catalyses the reaction DNA(n) + a 2'-deoxyribonucleoside 5'-triphosphate = DNA(n+1) + diphosphate. Poorly processive, error-prone DNA polymerase involved in untargeted mutagenesis. Copies undamaged DNA at stalled replication forks, which arise in vivo from mismatched or misaligned primer ends. These misaligned primers can be extended by PolIV. Exhibits no 3'-5' exonuclease (proofreading) activity. May be involved in translesional synthesis. The chain is DNA polymerase IV from Metallosphaera sedula (strain ATCC 51363 / DSM 5348 / JCM 9185 / NBRC 15509 / TH2).